We begin with the raw amino-acid sequence, 401 residues long: O-methyltransferase mfmE (401 aa).

S-adenosyl-L-methionine is bound by residues 243-244 and aspartate 268; that span reads GG. Histidine 308 (proton acceptor) is an active-site residue.

It belongs to the class I-like SAM-binding methyltransferase superfamily. Cation-independent O-methyltransferase family. COMT subfamily.

It participates in secondary metabolite biosynthesis; terpenoid biosynthesis. Functionally, O-methyltransferase; part of the gene cluster that mediates the biosynthesis of the phthalide-terpenoid hybrid 11'-O-desmethylfendlerol. Within the pathway, mfmE catalyzes the 7-O-methylation of the phthalide 5,7-dihydroxy-4-(hydroxymethyl)-6-methylphthalide to yield 5-hydroxy-4-(hydroxymethyl)-7-methoxy-6-methylphthalide. The biosynthesis of 11'-O-desmethylfendlerol begins with the NR-PKS mfmB that forms 3,5-dimethylorsellinic acid (DMOA), which is then transformed into the phthalide 5,7-dihydroxy-4-(hydroxymethyl)-6-methylphthalide by the cytochrome P450 monooxygenase mfmA and the hydrolase mfmC. Subsequently, the methyltransferase mfmE catalyzes 7-O-methylation to yield 5-hydroxy-4-(hydroxymethyl)-7-methoxy-6-methylphthalide, which undergoes C-3 hydroxylation by the cytochrome P450 monooxygenase mfmF. The resultant cyclopolic acid (2,5-dihydroxy-4-(hydroxymethyl)-7-methoxy-6-methylphthalide) is then farnesylated by the DMATS-type prenyltransferase mfmD to afford 5-O-farnesylcyclopolic acid. Finally, the Pyr4-family terpene cyclase mfmH cyclizes the farnesyl moiety of 5-O-farnesylcyclopolic acid into a drimane-like structure, thus completing the biosynthesis of 11'-O-desmethylfendlerol. The chain is O-methyltransferase mfmE from Annulohypoxylon moriforme (Filamentous fungus).